The chain runs to 545 residues: Chaperonin GroEL (545 aa).

Residues Thr30–Pro33, Lys51, Asp87–Thr91, Gly415, and Asp496 each bind ATP. The interval Pro526–Met545 is disordered. Residues Pro536–Met545 show a composition bias toward gly residues.

The protein belongs to the chaperonin (HSP60) family. Forms a cylinder of 14 subunits composed of two heptameric rings stacked back-to-back. Interacts with the co-chaperonin GroES.

Its subcellular location is the cytoplasm. The enzyme catalyses ATP + H2O + a folded polypeptide = ADP + phosphate + an unfolded polypeptide.. Its function is as follows. Together with its co-chaperonin GroES, plays an essential role in assisting protein folding. The GroEL-GroES system forms a nano-cage that allows encapsulation of the non-native substrate proteins and provides a physical environment optimized to promote and accelerate protein folding. This chain is Chaperonin GroEL, found in Paracoccus denitrificans (strain Pd 1222).